A 166-amino-acid polypeptide reads, in one-letter code: Phosphopantetheine adenylyltransferase (166 aa).

Position 9 (serine 9) interacts with substrate. ATP is bound by residues 9 to 10 (SF) and histidine 17. Residues lysine 41, threonine 74, and arginine 88 each coordinate substrate. ATP is bound by residues 89-91 (GLR), glutamate 99, and 124-130 (DSFISSS).

The protein belongs to the bacterial CoaD family. Homohexamer. Requires Mg(2+) as cofactor.

It localises to the cytoplasm. It carries out the reaction (R)-4'-phosphopantetheine + ATP + H(+) = 3'-dephospho-CoA + diphosphate. It participates in cofactor biosynthesis; coenzyme A biosynthesis; CoA from (R)-pantothenate: step 4/5. In terms of biological role, reversibly transfers an adenylyl group from ATP to 4'-phosphopantetheine, yielding dephospho-CoA (dPCoA) and pyrophosphate. This chain is Phosphopantetheine adenylyltransferase, found in Lactobacillus johnsonii (strain CNCM I-12250 / La1 / NCC 533).